The primary structure comprises 786 residues: MAMWIQAQQLQGDALHQMQALYGQHFPIEVRHYLSQWIESQAWDSIDLDNPQENIKATQLLEGLVQELQKKAEHQVGEDGFLLKIKLGHYATQLQNTYDRCPMELVRCIRHILYNEQRLVREANNGSSPAGSLADAMSQKHLQINQTFEELRLITQDTESELKKLQQTQEYFIIQYQESLRIQAQFAQLAQLNPQERMSRETALQQKQVSLETWLQREAQTLQQYRVELAEKHQKTLQLLRKQQTIILDDELIQWKRRQQLAGNGGPPEGSLDVLQSWCEKLAEIIWQNRQQIRRLEHLCQQLPIPGPVEEMLAEVNATITDIISALSTSTFIIEKQPPQVLKTQTKFAATVRLLVGGKLNVHMNPPQVKATIISEQQAKSLLKNENTRNDYSGEILNNCCVMEYHQATGTLSAHFRNMSLKRIKRSDRRGAESVTEEKFTILFDSQFSVGGNELVFQVKTLSLPVVVIVHGSQDNNATATVLWDNAFREPGRVPFAVPDKVLWPQLCEALNMKFKAEVQSNRGLTKENLVFLAQKLFNSSSNHLEDYNSMSVSWSQFNRENLPGRNYTFWQWFDGVMEVLKKHLKPHWNDGAILGFVNKQQAHDLLINKPDGTFLLRFSDSEIGGITIAWKFDSQERMFWNLMPFTTRDFSIRSLADRLGDLNYLIYVFPDRPKDEVYSKYYTPVPCERATAKAADGYVKPQIKQVVPEFVNASTDAGSGATYMDQAPSPVVCPQAHYNMYPQNPDSVLDTDGDFDLEDTMDVARRVEELLGRPMDSQWIPHAQS.

Phosphotyrosine is present on Tyr-90. Ser-128 is modified (phosphoserine). In terms of domain architecture, SH2 spans 589 to 686 (WNDGAILGFV…EVYSKYYTPV (98 aa)). Phosphotyrosine is present on residues Tyr-682 and Tyr-699.

This sequence belongs to the transcription factor STAT family. Upon activation, forms a homodimer or a heterodimer with a related family member. Binds NR3C1. Interacts with NCOA1. Interacts with NMI. Interacts with SOCS7. Interacts (via SH2 domain) with INSR. Interacts with CPEB3; this inhibits STAT5B-mediated transcriptional activation. Post-translationally, tyrosine phosphorylated in response to signaling via activated KIT, resulting in translocation to the nucleus. Tyrosine phosphorylated in response to signaling via activated FLT3; wild-type FLT3 results in much weaker phosphorylation than constitutively activated mutant FLT3. Alternatively, can be phosphorylated by JAK2. Phosphorylation at Tyr-699 by PTK6 or HCK leads to an increase of its transcriptional activity.

The protein localises to the cytoplasm. It is found in the nucleus. Functionally, carries out a dual function: signal transduction and activation of transcription. Mediates cellular responses to the cytokine KITLG/SCF and other growth factors. Binds to the GAS element and activates PRL-induced transcription. Positively regulates hematopoietic/erythroid differentiation. The sequence is that of Signal transducer and activator of transcription 5B (Stat5b) from Rattus norvegicus (Rat).